The chain runs to 447 residues: Transcriptional enhancer factor TEF-4 (447 aa).

Disordered regions lie at residues 1–46 and 183–218; these read MGEP…GVWS and TPFT…PPAW. The span at 11-20 shows a compositional bias: low complexity; it reads DDGSGWTGSE. Residues 25-40 are compositionally biased toward gly residues; it reads EGTGGSEGAGGDGGPD. A DNA-binding region (TEA) is located at residues 38-114; sequence GPDAEGVWSP…QVLARRKSRE (77 aa). The transcriptional activation stretch occupies residues 172-447; the sequence is WNVPDVKPFS…QHHIYRLVRD (276 aa). Residues 183-206 show a composition bias toward low complexity; sequence TPFTLSLTPPSTDLPGYEPPQALS. The span at 207 to 216 shows a compositional bias: pro residues; it reads PLPPPTPSPP.

Interacts with YAP1 and WWTR1/TAZ.

Its subcellular location is the nucleus. Its function is as follows. Transcription factor which plays a key role in the Hippo signaling pathway, a pathway involved in organ size control and tumor suppression by restricting proliferation and promoting apoptosis. The core of this pathway is composed of a kinase cascade wherein MST1/MST2, in complex with its regulatory protein SAV1, phosphorylates and activates LATS1/2 in complex with its regulatory protein MOB1, which in turn phosphorylates and inactivates YAP1 oncoprotein and WWTR1/TAZ. Acts by mediating gene expression of YAP1 and WWTR1/TAZ, thereby regulating cell proliferation, migration and epithelial mesenchymal transition (EMT) induction. Binds to the SPH and GT-IIC 'enhansons' (5'-GTGGAATGT-3'). May be involved in the gene regulation of neural development. Binds to the M-CAT motif. The sequence is that of Transcriptional enhancer factor TEF-4 (TEAD2) from Homo sapiens (Human).